Reading from the N-terminus, the 202-residue chain is MLKEILSSALLMLIMIDPSDKILLVSLLREDFHIEDVKSLIIRANLIGFILLLLFAVAGKIILQDIFHIELDALRVAGGFVLFKIGLEALEGGGMVTIKREKNILALAAVPVATPLIAGPAAITAAITLTAEHGIIVSIVGTLIAIAITAALMMIALYLMRGISKTALSVTIRIIGLFIMAIGAQMMITGAGGIVLNLIKGA.

Transmembrane regions (helical) follow at residues 5 to 25 (ILSS…ILLV), 47 to 67 (IGFI…QDIF), 76 to 96 (VAGG…GGMV), 104 to 124 (ILAL…AAIT), 135 to 155 (IIVS…LMMI), and 174 to 194 (IIGL…AGGI).

Belongs to the UPF0056 (MarC) family.

Its subcellular location is the cell membrane. This is UPF0056 membrane protein PH0214 from Pyrococcus horikoshii (strain ATCC 700860 / DSM 12428 / JCM 9974 / NBRC 100139 / OT-3).